The primary structure comprises 369 residues: Putative agmatine deiminase (369 aa).

Residue C355 is the Amidino-cysteine intermediate of the active site.

The protein belongs to the agmatine deiminase family.

It carries out the reaction agmatine + H2O = N-carbamoylputrescine + NH4(+). This Marinomonas sp. (strain MWYL1) protein is Putative agmatine deiminase.